The chain runs to 475 residues: Ribulose bisphosphate carboxylase large chain (475 aa).

2 residues coordinate substrate: Asn-123 and Thr-173. The active-site Proton acceptor is the Lys-175. Residue Lys-177 coordinates substrate. Mg(2+)-binding residues include Lys-201, Asp-203, and Glu-204. Position 201 is an N6-carboxylysine (Lys-201). His-294 acts as the Proton acceptor in catalysis. Substrate-binding residues include Arg-295, His-327, and Ser-379.

This sequence belongs to the RuBisCO large chain family. Type I subfamily. In terms of assembly, heterohexadecamer of 8 large chains and 8 small chains. Requires Mg(2+) as cofactor.

The protein resides in the plastid. Its subcellular location is the cyanelle. The enzyme catalyses 2 (2R)-3-phosphoglycerate + 2 H(+) = D-ribulose 1,5-bisphosphate + CO2 + H2O. It carries out the reaction D-ribulose 1,5-bisphosphate + O2 = 2-phosphoglycolate + (2R)-3-phosphoglycerate + 2 H(+). Its function is as follows. RuBisCO catalyzes two reactions: the carboxylation of D-ribulose 1,5-bisphosphate, the primary event in carbon dioxide fixation, as well as the oxidative fragmentation of the pentose substrate in the photorespiration process. Both reactions occur simultaneously and in competition at the same active site. This chain is Ribulose bisphosphate carboxylase large chain, found in Cyanophora paradoxa.